A 545-amino-acid polypeptide reads, in one-letter code: Glucose-6-phosphate isomerase (545 aa).

Glutamate 351 functions as the Proton donor in the catalytic mechanism. Active-site residues include histidine 382 and lysine 510.

The protein belongs to the GPI family.

The protein localises to the cytoplasm. It catalyses the reaction alpha-D-glucose 6-phosphate = beta-D-fructose 6-phosphate. The protein operates within carbohydrate biosynthesis; gluconeogenesis. It participates in carbohydrate degradation; glycolysis; D-glyceraldehyde 3-phosphate and glycerone phosphate from D-glucose: step 2/4. Its function is as follows. Catalyzes the reversible isomerization of glucose-6-phosphate to fructose-6-phosphate. The protein is Glucose-6-phosphate isomerase of Shewanella putrefaciens (strain CN-32 / ATCC BAA-453).